A 121-amino-acid chain; its full sequence is uncharacterized protein (121 aa).

The signal sequence occupies residues 1 to 31 (MILNNKGFIRILEATIAGIMVILVFSYLVMS).

It to B.burgdorferi BB0465 N-terminal region.

This is an uncharacterized protein from Methanocaldococcus jannaschii (strain ATCC 43067 / DSM 2661 / JAL-1 / JCM 10045 / NBRC 100440) (Methanococcus jannaschii).